A 198-amino-acid polypeptide reads, in one-letter code: Peptidyl-tRNA hydrolase (198 aa).

Residue Y15 participates in tRNA binding. H20 functions as the Proton acceptor in the catalytic mechanism. TRNA contacts are provided by F66, N68, and N114.

It belongs to the PTH family. As to quaternary structure, monomer.

Its subcellular location is the cytoplasm. It carries out the reaction an N-acyl-L-alpha-aminoacyl-tRNA + H2O = an N-acyl-L-amino acid + a tRNA + H(+). Hydrolyzes ribosome-free peptidyl-tRNAs (with 1 or more amino acids incorporated), which drop off the ribosome during protein synthesis, or as a result of ribosome stalling. Functionally, catalyzes the release of premature peptidyl moieties from peptidyl-tRNA molecules trapped in stalled 50S ribosomal subunits, and thus maintains levels of free tRNAs and 50S ribosomes. The chain is Peptidyl-tRNA hydrolase from Cupriavidus taiwanensis (strain DSM 17343 / BCRC 17206 / CCUG 44338 / CIP 107171 / LMG 19424 / R1) (Ralstonia taiwanensis (strain LMG 19424)).